The sequence spans 418 residues: UDP-N-acetylglucosamine 1-carboxyvinyltransferase (418 aa).

22 to 23 (KN) contacts phosphoenolpyruvate. Arg-92 contacts UDP-N-acetyl-alpha-D-glucosamine. Cys-116 acts as the Proton donor in catalysis. 2-(S-cysteinyl)pyruvic acid O-phosphothioketal is present on Cys-116. UDP-N-acetyl-alpha-D-glucosamine-binding positions include 121–125 (RPIDL), Asp-305, and Leu-327.

The protein belongs to the EPSP synthase family. MurA subfamily.

The protein resides in the cytoplasm. It catalyses the reaction phosphoenolpyruvate + UDP-N-acetyl-alpha-D-glucosamine = UDP-N-acetyl-3-O-(1-carboxyvinyl)-alpha-D-glucosamine + phosphate. Its pathway is cell wall biogenesis; peptidoglycan biosynthesis. In terms of biological role, cell wall formation. Adds enolpyruvyl to UDP-N-acetylglucosamine. The protein is UDP-N-acetylglucosamine 1-carboxyvinyltransferase of Campylobacter lari (strain RM2100 / D67 / ATCC BAA-1060).